Here is a 134-residue protein sequence, read N- to C-terminus: 15.4 kDa class V heat shock protein (134 aa).

The sHSP domain maps to 19–126; the sequence is SLNNYQENHV…LIDPSDVPES (108 aa).

It belongs to the small heat shock protein (HSP20) family. May form oligomeric structures.

It is found in the cytoplasm. This chain is 15.4 kDa class V heat shock protein (HSP15.4), found in Arabidopsis thaliana (Mouse-ear cress).